We begin with the raw amino-acid sequence, 63 residues long: Prokaryotic ubiquitin-like protein Pup (63 aa).

The interval 1–28 (MSDRQTQIPAGGGREDDHDDQVQSAGQV) is disordered. Residues 19–57 (DDQVQSAGQVQVNTEGVDDLLDEIDGLLENNAEEFVRSY) are ARC ATPase binding. Glu-63 is covalently cross-linked (Isoglutamyl lysine isopeptide (Glu-Lys) (interchain with K-? in acceptor proteins)).

Belongs to the prokaryotic ubiquitin-like protein family. As to quaternary structure, strongly interacts with the proteasome-associated ATPase ARC through a hydrophobic interface; the interacting region of Pup lies in its C-terminal half. There is one Pup binding site per ARC hexamer ring.

It participates in protein degradation; proteasomal Pup-dependent pathway. Protein modifier that is covalently attached to lysine residues of substrate proteins, thereby targeting them for proteasomal degradation. The tagging system is termed pupylation. This is Prokaryotic ubiquitin-like protein Pup from Corynebacterium efficiens (strain DSM 44549 / YS-314 / AJ 12310 / JCM 11189 / NBRC 100395).